The chain runs to 670 residues: E3 ubiquitin-protein ligase MAG2 (670 aa).

Disordered regions lie at residues 1–84 and 124–145; these read MVEP…TSTR and EVER…RDEH. Residues 20–39 are compositionally biased toward polar residues; it reads DTLNATSNSSKQGVSNNKRN. Residues 51-66 are compositionally biased toward basic and acidic residues; the sequence is SDGRDNAHNYHGEGRR. Residues 195-250 form an RING-type zinc finger; that stretch reads CSICLSEEPVAPRMVTCGHIFCLSCLLNFFSIEETVKNKETGYSKKKKYKECPLCG. The segment at 609 to 670 is disordered; sequence TEDEKASKEN…LFSSNHQALG (62 aa). Basic and acidic residues predominate over residues 610-622; it reads EDEKASKENKEFQ. The span at 637 to 649 shows a compositional bias: low complexity; it reads VTDSTDSPPTSNG.

This sequence belongs to the RNF10 family.

It localises to the cytoplasm. The catalysed reaction is S-ubiquitinyl-[E2 ubiquitin-conjugating enzyme]-L-cysteine + [acceptor protein]-L-lysine = [E2 ubiquitin-conjugating enzyme]-L-cysteine + N(6)-ubiquitinyl-[acceptor protein]-L-lysine.. It functions in the pathway protein modification; protein ubiquitination. In terms of biological role, E3 ubiquitin-protein ligase involved in the degradation of non-functional 18S rRNAs in response to stalled ribosomes. Catalyzes monoubiquitination of RPS3/uS3 in response to stalled ribosomes, initiating a HEL2-dependent response that activates the degradation of non-functional 18S rRNAs. This is E3 ubiquitin-protein ligase MAG2 from Saccharomyces cerevisiae (strain ATCC 204508 / S288c) (Baker's yeast).